A 398-amino-acid chain; its full sequence is Deoxyguanosinetriphosphate triphosphohydrolase-like protein (398 aa).

One can recognise an HD domain in the interval 68 to 215 (RLTHTLEVAQ…AAISDDIAYD (148 aa)).

Belongs to the dGTPase family. Type 2 subfamily.

The sequence is that of Deoxyguanosinetriphosphate triphosphohydrolase-like protein from Azorhizobium caulinodans (strain ATCC 43989 / DSM 5975 / JCM 20966 / LMG 6465 / NBRC 14845 / NCIMB 13405 / ORS 571).